We begin with the raw amino-acid sequence, 296 residues long: 4-hydroxy-tetrahydrodipicolinate synthase (296 aa).

Thr49 provides a ligand contact to pyruvate. Catalysis depends on Tyr137, which acts as the Proton donor/acceptor. The active-site Schiff-base intermediate with substrate is the Lys165. Ile207 serves as a coordination point for pyruvate.

This sequence belongs to the DapA family. Homotetramer; dimer of dimers.

The protein resides in the cytoplasm. It carries out the reaction L-aspartate 4-semialdehyde + pyruvate = (2S,4S)-4-hydroxy-2,3,4,5-tetrahydrodipicolinate + H2O + H(+). It participates in amino-acid biosynthesis; L-lysine biosynthesis via DAP pathway; (S)-tetrahydrodipicolinate from L-aspartate: step 3/4. Its function is as follows. Catalyzes the condensation of (S)-aspartate-beta-semialdehyde [(S)-ASA] and pyruvate to 4-hydroxy-tetrahydrodipicolinate (HTPA). In Bradyrhizobium diazoefficiens (strain JCM 10833 / BCRC 13528 / IAM 13628 / NBRC 14792 / USDA 110), this protein is 4-hydroxy-tetrahydrodipicolinate synthase.